The following is a 379-amino-acid chain: Epoxyqueuosine reductase (379 aa).

The active-site Proton donor is the aspartate 139. Residues 181–213 (IPLPVDQPVEEGCGKCVACMTICPTGAIVEPYT) enclose the 4Fe-4S ferredoxin-type domain. Residues cysteine 193, cysteine 196, cysteine 199, cysteine 203, cysteine 219, cysteine 246, cysteine 249, and cysteine 253 each coordinate [4Fe-4S] cluster.

This sequence belongs to the QueG family. Monomer. Requires cob(II)alamin as cofactor. [4Fe-4S] cluster serves as cofactor.

It is found in the cytoplasm. It carries out the reaction epoxyqueuosine(34) in tRNA + AH2 = queuosine(34) in tRNA + A + H2O. Its pathway is tRNA modification; tRNA-queuosine biosynthesis. In terms of biological role, catalyzes the conversion of epoxyqueuosine (oQ) to queuosine (Q), which is a hypermodified base found in the wobble positions of tRNA(Asp), tRNA(Asn), tRNA(His) and tRNA(Tyr). In Escherichia coli (strain K12), this protein is Epoxyqueuosine reductase.